Reading from the N-terminus, the 109-residue chain is Cell division protein ZapA (109 aa).

Residues 21–99 adopt a coiled-coil conformation; the sequence is PEQRDALNQA…IEQALLEQGR (79 aa).

Belongs to the ZapA family. Type 1 subfamily. In terms of assembly, homodimer. Interacts with FtsZ.

Its subcellular location is the cytoplasm. Its function is as follows. Activator of cell division through the inhibition of FtsZ GTPase activity, therefore promoting FtsZ assembly into bundles of protofilaments necessary for the formation of the division Z ring. It is recruited early at mid-cell but it is not essential for cell division. The protein is Cell division protein ZapA of Klebsiella pneumoniae subsp. pneumoniae (strain ATCC 700721 / MGH 78578).